The chain runs to 174 residues: Sarcoplasmic calcium-binding protein (174 aa).

S1 carries the N-acetylserine modification. EF-hand domains are found at residues L3–E38, G55–S90, V91–D126, and K127–N160. Ca(2+)-binding residues include D16, D18, D20, and D27. The Ca(2+) site is built by D104, N106, D108, N110, E115, D138, N140, D142, and E149.

Like parvalbumins, SCPs seem to be more abundant in fast contracting muscles, but no functional relationship can be established from this distribution. The sequence is that of Sarcoplasmic calcium-binding protein from Hediste diversicolor (Sandworm).